The chain runs to 225 residues: ATP-dependent dethiobiotin synthetase BioD (225 aa).

12-17 (GVGKTV) lines the ATP pocket. Threonine 16 contributes to the Mg(2+) binding site. The active site involves lysine 37. Threonine 41 lines the substrate pocket. ATP is bound by residues aspartate 49, 108-111 (EGAG), and 197-199 (PAG). Residues aspartate 49 and glutamate 108 each contribute to the Mg(2+) site.

The protein belongs to the dethiobiotin synthetase family. As to quaternary structure, homodimer. Requires Mg(2+) as cofactor.

Its subcellular location is the cytoplasm. It carries out the reaction (7R,8S)-7,8-diammoniononanoate + CO2 + ATP = (4R,5S)-dethiobiotin + ADP + phosphate + 3 H(+). It participates in cofactor biosynthesis; biotin biosynthesis; biotin from 7,8-diaminononanoate: step 1/2. Its function is as follows. Catalyzes a mechanistically unusual reaction, the ATP-dependent insertion of CO2 between the N7 and N8 nitrogen atoms of 7,8-diaminopelargonic acid (DAPA, also called 7,8-diammoniononanoate) to form a ureido ring. In Mycolicibacterium smegmatis (strain ATCC 700084 / mc(2)155) (Mycobacterium smegmatis), this protein is ATP-dependent dethiobiotin synthetase BioD.